The sequence spans 95 residues: Cystatin-A2 (95 aa).

The short motif at 47–51 (QLVNG) is the Secondary area of contact element.

Belongs to the cystatin family.

The protein resides in the cytoplasm. Intracellular thiol proteinase inhibitor. Inhibits cathepsin B, but not papain. This chain is Cystatin-A2 (cpiB), found in Dictyostelium discoideum (Social amoeba).